Consider the following 499-residue polypeptide: Probable 2-isopropylmalate synthase (499 aa).

The Pyruvate carboxyltransferase domain maps to 5 to 256 (VRIFDTTLRD…ELDVRTEMLV (252 aa)). Residues Asp-14, His-194, His-196, and Asn-230 each contribute to the a divalent metal cation site.

This sequence belongs to the alpha-IPM synthase/homocitrate synthase family. As to quaternary structure, homodimer. The cofactor is a divalent metal cation.

It carries out the reaction 3-methyl-2-oxobutanoate + acetyl-CoA + H2O = (2S)-2-isopropylmalate + CoA + H(+). Its pathway is amino-acid biosynthesis; L-leucine biosynthesis; L-leucine from 3-methyl-2-oxobutanoate: step 1/4. Its function is as follows. Catalyzes the condensation of the acetyl group of acetyl-CoA with 3-methyl-2-oxobutanoate (2-oxoisovalerate) to form 3-carboxy-3-hydroxy-4-methylpentanoate (2-isopropylmalate). This chain is Probable 2-isopropylmalate synthase (leuA), found in Methanopyrus kandleri (strain AV19 / DSM 6324 / JCM 9639 / NBRC 100938).